The following is a 382-amino-acid chain: Histidinol-phosphate aminotransferase (382 aa).

Position 215 is an N6-(pyridoxal phosphate)lysine (Lys215). Positions 363-382 (NIDNQNKTYSQTSSIRKGTI) are disordered.

It belongs to the class-II pyridoxal-phosphate-dependent aminotransferase family. Histidinol-phosphate aminotransferase subfamily. In terms of assembly, homodimer. Pyridoxal 5'-phosphate is required as a cofactor.

The catalysed reaction is L-histidinol phosphate + 2-oxoglutarate = 3-(imidazol-4-yl)-2-oxopropyl phosphate + L-glutamate. Its pathway is amino-acid biosynthesis; L-histidine biosynthesis; L-histidine from 5-phospho-alpha-D-ribose 1-diphosphate: step 7/9. In Yersinia pestis bv. Antiqua (strain Antiqua), this protein is Histidinol-phosphate aminotransferase.